We begin with the raw amino-acid sequence, 140 residues long: uncharacterized protein (140 aa).

The segment covering 1-15 has biased composition (basic and acidic residues); it reads MQRQTGHMEDKKRTG. The interval 1–34 is disordered; the sequence is MQRQTGHMEDKKRTGLESQGTENAFSDGRDGKDG.

This is an uncharacterized protein from Gallus gallus (Chicken).